A 351-amino-acid polypeptide reads, in one-letter code: Holliday junction branch migration complex subunit RuvB (351 aa).

Positions 4 to 185 (HDRELVSPEA…FGFVAHMDFY (182 aa)) are large ATPase domain (RuvB-L). ATP contacts are provided by residues L24, R25, G66, K69, T70, T71, 132 to 134 (EDF), R175, Y185, and R222. T70 contributes to the Mg(2+) binding site. The segment at 186–256 (SPEELELILH…CARAALSLYE (71 aa)) is small ATPAse domain (RuvB-S). Positions 259–351 (DEGLDRLDRA…AALFDPDEEP (93 aa)) are head domain (RuvB-H). Residues R314 and R319 each contribute to the DNA site.

The protein belongs to the RuvB family. In terms of assembly, homohexamer. Forms an RuvA(8)-RuvB(12)-Holliday junction (HJ) complex. HJ DNA is sandwiched between 2 RuvA tetramers; dsDNA enters through RuvA and exits via RuvB. An RuvB hexamer assembles on each DNA strand where it exits the tetramer. Each RuvB hexamer is contacted by two RuvA subunits (via domain III) on 2 adjacent RuvB subunits; this complex drives branch migration. In the full resolvosome a probable DNA-RuvA(4)-RuvB(12)-RuvC(2) complex forms which resolves the HJ.

The protein localises to the cytoplasm. It carries out the reaction ATP + H2O = ADP + phosphate + H(+). Its function is as follows. The RuvA-RuvB-RuvC complex processes Holliday junction (HJ) DNA during genetic recombination and DNA repair, while the RuvA-RuvB complex plays an important role in the rescue of blocked DNA replication forks via replication fork reversal (RFR). RuvA specifically binds to HJ cruciform DNA, conferring on it an open structure. The RuvB hexamer acts as an ATP-dependent pump, pulling dsDNA into and through the RuvAB complex. RuvB forms 2 homohexamers on either side of HJ DNA bound by 1 or 2 RuvA tetramers; 4 subunits per hexamer contact DNA at a time. Coordinated motions by a converter formed by DNA-disengaged RuvB subunits stimulates ATP hydrolysis and nucleotide exchange. Immobilization of the converter enables RuvB to convert the ATP-contained energy into a lever motion, pulling 2 nucleotides of DNA out of the RuvA tetramer per ATP hydrolyzed, thus driving DNA branch migration. The RuvB motors rotate together with the DNA substrate, which together with the progressing nucleotide cycle form the mechanistic basis for DNA recombination by continuous HJ branch migration. Branch migration allows RuvC to scan DNA until it finds its consensus sequence, where it cleaves and resolves cruciform DNA. The protein is Holliday junction branch migration complex subunit RuvB of Thermobifida fusca (strain YX).